A 214-amino-acid chain; its full sequence is MIRSTLIFREDGLPLCASVDDDTDPSLQEQKKKVKILISRFTPTSANEATVESGDFEIHYIRLNTVVYIVVAERNYPRNLAFSYLADIQQEFEHSYGGQLSKSNVRPYEFVSFDNFLQKTKKVYNDKRVQGNMDQLNQDLKGVKQIMTKNIEDLLYRGDSLDKMSDMSASLRQDAKKYRASAQKINFDLLISQYAPIAIIAFFFVFLLWWMFLR.

The Cytoplasmic segment spans residues 1 to 192 (MIRSTLIFRE…QKINFDLLIS (192 aa)). A Longin domain is found at 6-117 (LIFREDGLPL…YEFVSFDNFL (112 aa)). The region spanning 132-192 (NMDQLNQDLK…QKINFDLLIS (61 aa)) is the v-SNARE coiled-coil homology domain. Residues 193–213 (QYAPIAIIAFFFVFLLWWMFL) form a helical; Anchor for type IV membrane protein membrane-spanning segment. A topological domain (vesicular) is located at residue arginine 214.

It belongs to the synaptobrevin family.

Its subcellular location is the membrane. It localises to the endoplasmic reticulum membrane. The protein resides in the golgi apparatus membrane. Functionally, required for transport from the ER to the Golgi complex. The chain is Protein transport protein SEC22 (SEC22) from Kluyveromyces lactis (strain ATCC 8585 / CBS 2359 / DSM 70799 / NBRC 1267 / NRRL Y-1140 / WM37) (Yeast).